The sequence spans 316 residues: protein SLOW GREEN 1, chloroplastic (316 aa).

The transit peptide at 1–39 (MISSLSASSSLVSSFVAVKATPVTGPLIPRRDLLSIRIR) directs the protein to the chloroplast. TPR repeat units lie at residues 118-151 (VETL…QPEE), 152-185 (TEWK…NPLS), 226-259 (RDVR…DPKD), and 261-293 (RPYF…SPKK).

Ubiquitous. Preferentially expressed in newly formed green tissues.

Its subcellular location is the plastid. It localises to the chloroplast. Its function is as follows. Required for the early stage of chloroplast development. May be involved in chloroplast protein biosynthesis and/or degradation. The protein is protein SLOW GREEN 1, chloroplastic of Arabidopsis thaliana (Mouse-ear cress).